Reading from the N-terminus, the 338-residue chain is MNVCAFSLALALVGSVSGQYYDYDIPLFMYGQISPNCAPECNCPHSYPTAMYCDDLKLKSVPMVPPGIKYLYLRNNQIDHIDEKAFENVTDLQWLILDHNLLENSKIKGKVFSKLKQLKKLHINYNNLTESVGPLPKSLQDLQLTNNKISKLGSFDGLVNLTFIYLQHNQLKEDAVSASLKGLKSLEYLDLSFNQMSKLPAGLPTSLLTLYLDNNKISNIPDEYFKRFTGLQYLRLSHNELADSGVPGNSFNISSLLELDLSYNKLKSIPTVNENLENYYLEVNELEKFDVKSFCKILGPLSYSKIKHLRLDGNPLTQSSLPPDMYECLRVANEITVN.

Residues 1-18 (MNVCAFSLALALVGSVSG) form the signal peptide. Position 19 is a pyrrolidone carboxylic acid (Gln19). Sulfotyrosine is present on residues Tyr20, Tyr21, Tyr23, and Tyr30. The region spanning 28–66 (FMYGQISPNCAPECNCPHSYPTAMYCDDLKLKSVPMVPP) is the LRRNT domain. 8 LRR repeats span residues 67–88 (GIKYLYLRNNQIDHIDEKAFEN), 91–114 (DLQWLILDHNLLENSKIKGKVFSK), 117–137 (QLKKLHINYNNLTESVGPLPK), 138–159 (SLQDLQLTNNKISKLGSFDGLV), 160–181 (NLTFIYLQHNQLKEDAVSASLK), 185–205 (SLEYLDLSFNQMSKLPAGLPT), 206–227 (SLLTLYLDNNKISNIPDEYFKR), and 230–250 (GLQYLRLSHNELADSGVPGNS). Asn88 is a glycosylation site (N-linked (GlcNAc...) (keratan sulfate) asparagine). Asn127 is a glycosylation site (N-linked (GlcNAc...) (keratan sulfate) asparagine). Asn160 is a glycosylation site (N-linked (GlcNAc...) (keratan sulfate) asparagine). Asn252 carries N-linked (GlcNAc...) (keratan sulfate) asparagine glycosylation. LRR repeat units follow at residues 255 to 276 (SLLELDLSYNKLKSIPTVNENL) and 277 to 296 (ENYYLEVNELEKFDVKSFCK). Cys295 and Cys328 form a disulfide bridge. A Phosphoserine modification is found at Ser304. The LRR 11 repeat unit spans residues 305–326 (KIKHLRLDGNPLTQSSLPPDMY).

Belongs to the small leucine-rich proteoglycan (SLRP) family. SLRP class II subfamily. As to quaternary structure, binds to laminin. Contains keratan sulfate. Post-translationally, cys-37, Cys-41, Cys-43 and Cys-53 are involved in disulfide bonds. As to expression, cornea and other tissues.

Its subcellular location is the secreted. The protein resides in the extracellular space. It localises to the extracellular matrix. The polypeptide is Lumican (Lum) (Mus musculus (Mouse)).